We begin with the raw amino-acid sequence, 469 residues long: Cysteine--tRNA ligase (469 aa).

Residue Cys-33 coordinates Zn(2+). The short motif at 35-45 is the 'HIGH' region element; that stretch reads PTVYNLLHIGN. Zn(2+)-binding residues include Cys-214, His-239, and Glu-243. Residues 271–275 carry the 'KMSKS' region motif; sequence KMSKS. Residue Lys-274 participates in ATP binding.

It belongs to the class-I aminoacyl-tRNA synthetase family. In terms of assembly, monomer. Zn(2+) is required as a cofactor.

The protein localises to the cytoplasm. It catalyses the reaction tRNA(Cys) + L-cysteine + ATP = L-cysteinyl-tRNA(Cys) + AMP + diphosphate. This Petrotoga mobilis (strain DSM 10674 / SJ95) protein is Cysteine--tRNA ligase.